Here is a 331-residue protein sequence, read N- to C-terminus: MVTYKDSGVNIEEGYKSVKLMKEYSAQTFIPGVLNGLGSFAGMFELGKYKNPVLVSGTDGVGTKLKIAFEMKIYDTVGIDCVAMCVNDILCHGAKPLFFLDYLACSNLEAEVAAELVKGISKGCMDAGCALIGGETAEMPGFYSKGEYDMAGFAVGVVEKDNIINGSTVEEGDVLVGIASSGVHSNGYSLVRKLVDNFQVDFFGSALGEVLLTPTRIYVKPVLKLLEKFKIKAMAHITGGGFYENIPRMFKEDFTAVIDKNSFEMPEIFKYIMDLGVDEEHMYNTYNMGIGFVLCVDSKDAPDIIKDLNEMGEKAYIIGHVKRREKRVCLK.

It belongs to the AIR synthase family.

It is found in the cytoplasm. The enzyme catalyses 2-formamido-N(1)-(5-O-phospho-beta-D-ribosyl)acetamidine + ATP = 5-amino-1-(5-phospho-beta-D-ribosyl)imidazole + ADP + phosphate + H(+). Its pathway is purine metabolism; IMP biosynthesis via de novo pathway; 5-amino-1-(5-phospho-D-ribosyl)imidazole from N(2)-formyl-N(1)-(5-phospho-D-ribosyl)glycinamide: step 2/2. This Clostridium kluyveri (strain NBRC 12016) protein is Phosphoribosylformylglycinamidine cyclo-ligase.